Here is a 347-residue protein sequence, read N- to C-terminus: MLKKSDFHYDLPEELIAQGPLPERSASRLMLVPSAPEQFQDCYVRDLPELLQPGDLLVFNDTRVIPARLFGRKVSGGRVELLIERFLGTHQAVVQLRTSRSLKVGNRILLDAGGHAEVLGRDGEFYLLSFDVESPLEQWLSDVGQLPLPPYIHREPDEYDRERYQTVFARSVGAVAAPTAGLHFDESLLARLRARGVEFGYITLHVGAGTFQPVRVALLQEHVMHSEWFKVGAELVEQVRSARARGGRVIAVGTTVVRSLESAMRHGELQPFVGETQIFIFPGYCIRSVDAMVTNFHLPESTLLMLVAAFAGRTRILDAYYHAVQQRYRFFSYGDAMLLFPRNAGEQ.

The protein belongs to the QueA family. In terms of assembly, monomer.

It localises to the cytoplasm. The catalysed reaction is 7-aminomethyl-7-carbaguanosine(34) in tRNA + S-adenosyl-L-methionine = epoxyqueuosine(34) in tRNA + adenine + L-methionine + 2 H(+). The protein operates within tRNA modification; tRNA-queuosine biosynthesis. In terms of biological role, transfers and isomerizes the ribose moiety from AdoMet to the 7-aminomethyl group of 7-deazaguanine (preQ1-tRNA) to give epoxyqueuosine (oQ-tRNA). The chain is S-adenosylmethionine:tRNA ribosyltransferase-isomerase from Xylella fastidiosa (strain M23).